A 1130-amino-acid chain; its full sequence is 3-hydroxy-3-methylglutaryl-coenzyme A reductase 1 (1130 aa).

Over 1–46 the chain is Cytoplasmic; it reads MATSLITRKLRSAEATNDVEPGWLKRQVTGVLQSISSHACQHPIHT. Residues 47–67 form a helical membrane-spanning segment; sequence IVVIALLASTTYVGLLEGSLF. Residues 68 to 242 lie on the Lumenal side of the membrane; it reads DSVRNSRNIA…DLIKHAETID (175 aa). N-linked (GlcNAc...) asparagine glycosylation occurs at asparagine 148. The SSD domain maps to 242–415; it reads DIVIMTLGYL…FTFYTTILCI (174 aa). Residues 243-263 form a helical membrane-spanning segment; sequence IVIMTLGYLSMHLSFVSLFFS. Residues 264 to 270 lie on the Cytoplasmic side of the membrane; the sequence is MRRLGSN. The chain crosses the membrane as a helical span at residues 271-291; that stretch reads FWLAATVLFSGVFAFLFGLLV. Over 292–296 the chain is Lumenal; the sequence is TTKLG. The helical transmembrane segment at 297-317 threads the bilayer; it reads VPINVLLLSEGLPFLVVTIGF. The Cytoplasmic portion of the chain corresponds to 318 to 366; that stretch reads EKPIILTRAVLTAAADNRGRAGQASSSTTKSIQDSIQTAIKEQGFEIIR. A helical membrane pass occupies residues 367–387; that stretch reads DYCIEIAILIAGAASGVQGGL. Topologically, residues 388-389 are lumenal; sequence RQ. A helical transmembrane segment spans residues 390-410; the sequence is FCFLAAWILFFDCVLLFTFYT. Over 411-476 the chain is Cytoplasmic; that stretch reads TILCIKLEIN…RKLRSSSVRR (66 aa). A helical transmembrane segment spans residues 477 to 497; that stretch reads FKILMVGGFVLVNVVNLSTIP. At 498 to 601 the chain is on the lumenal side; that stretch reads FRDSSQGAGL…ESLLKSIEDP (104 aa). A helical transmembrane segment spans residues 602 to 622; it reads IISKWIIAALTLSIILNGYLF. Residues 623 to 1130 are Cytoplasmic-facing; it reads NAARWSIKEP…ARGLTMSSSE (508 aa). Glutamate 792 acts as the Charge relay system in catalysis. 798-804 contributes to the CoA binding site; the sequence is STSRGAK. NADP(+) contacts are provided by residues 859–861 and 886–894; these read SRF and DAMGMNMIS. Lysine 926 acts as the Charge relay system in catalysis. A CoA-binding site is contributed by 955–957; the sequence is VLK. Catalysis depends on aspartate 1002, which acts as the Charge relay system. 1097–1098 lines the CoA pocket; it reads AH. Histidine 1098 serves as the catalytic Proton donor. NADP(+) is bound at residue 1102 to 1103; that stretch reads NR. A compositionally biased stretch (low complexity) spans 1103–1122; it reads RSAATTRTSTPVSAAVSAAR. A disordered region spans residues 1103–1130; that stretch reads RSAATTRTSTPVSAAVSAARGLTMSSSE.

The protein belongs to the HMG-CoA reductase family.

The protein resides in the endoplasmic reticulum membrane. It carries out the reaction (R)-mevalonate + 2 NADP(+) + CoA = (3S)-3-hydroxy-3-methylglutaryl-CoA + 2 NADPH + 2 H(+). It functions in the pathway metabolic intermediate biosynthesis; (R)-mevalonate biosynthesis; (R)-mevalonate from acetyl-CoA: step 3/3. Functionally, HMG-CoA reductase; part of the first module of ergosterol biosynthesis pathway that includes the early steps of the pathway, conserved across all eukaryotes, and which results in the formation of mevalonate from acetyl-coenzyme A (acetyl-CoA). Hmg1 and hmg2 catalyze the reduction of hydroxymethylglutaryl-CoA (HMG-CoA) to mevalonate. The first module starts with the action of the cytosolic acetyl-CoA acetyltransferase erg10B that catalyzes the formation of acetoacetyl-CoA. The hydroxymethylglutaryl-CoA synthases erg13A and erg13B then condense acetyl-CoA with acetoacetyl-CoA to form HMG-CoA. The rate-limiting step of the early module is the reduction to mevalonate by the 3-hydroxy-3-methylglutaryl-coenzyme A (HMG-CoA) reductases hmg1 and hmg2. Mevalonate is also a precursor for the extracellular siderophore triacetylfusarinine C (TAFC). This is 3-hydroxy-3-methylglutaryl-coenzyme A reductase 1 from Aspergillus fumigatus (strain ATCC MYA-4609 / CBS 101355 / FGSC A1100 / Af293) (Neosartorya fumigata).